The sequence spans 82 residues: Sec-independent protein translocase protein TatA (82 aa).

A helical transmembrane segment spans residues 1–21; sequence MHPPSITQLLIILLIIVLLFG. Residues 42 to 82 form a disordered region; the sequence is AVKEDEEDNQSEENTKSQIKQSESKNENVSKTHTDSQKQDT. The span at 63 to 82 shows a compositional bias: basic and acidic residues; sequence SESKNENVSKTHTDSQKQDT.

Belongs to the TatA/E family. In terms of assembly, the Tat system comprises two distinct complexes: a TatABC complex, containing multiple copies of TatA, TatB and TatC subunits, and a separate TatA complex, containing only TatA subunits. Substrates initially bind to the TatABC complex, which probably triggers association of the separate TatA complex to form the active translocon.

It is found in the cell inner membrane. Part of the twin-arginine translocation (Tat) system that transports large folded proteins containing a characteristic twin-arginine motif in their signal peptide across membranes. TatA could form the protein-conducting channel of the Tat system. This chain is Sec-independent protein translocase protein TatA, found in Helicobacter hepaticus (strain ATCC 51449 / 3B1).